Reading from the N-terminus, the 554-residue chain is MAYYRTPHDVTALPAWQALQKHRDAMQSFSMREAFAADAKRFDQFSLSACGLFLDYSKNLITEQSRDLLVNLANEVGLQDAIKSMFSGEIINASEGRPVLHTALRRPVGDKLSVNGVNVMPEVHKVLNQITELVGRIHDGLWRGYSEKPITDVVNIGIGGSFLGPELVSEALLPYAQRGVRCHYLANIDGSEFHELSANLRAETTLFIVSSKSFNTLETLKNAMAARTWYLAQGGSEAELYRHFIAVSSNKAAAVAFGIREENIFPMWDWVGGRYSLWSAIGLPIALAIGTANFKELLSGAYTMDQHFQTAPFDKNMPVLLALLGVWYGNFWDANSHAILPYDHYLRNITKHLQQLDMESNGKSVLQDGTPVKTDTGPVIWGGVGCNGQHAYHQLLHQGTQLIPADFIVPVVSFNPVADHHQWLYANCLSQSQALMLGKTREEAEAELRAKGLNEADIEKLAPHKVIPGNRPSNTLVVERISPRRLGALVAMYEHKVFVQSVIWGINAFDQWGVELGKELGKGVYQRLVGSLEDSAEDGSTQGLINYFRGRHRG.

Catalysis depends on E359, which acts as the Proton donor. Catalysis depends on residues H390 and K518.

The protein belongs to the GPI family.

It is found in the cytoplasm. The catalysed reaction is alpha-D-glucose 6-phosphate = beta-D-fructose 6-phosphate. It participates in carbohydrate biosynthesis; gluconeogenesis. The protein operates within carbohydrate degradation; glycolysis; D-glyceraldehyde 3-phosphate and glycerone phosphate from D-glucose: step 2/4. Catalyzes the reversible isomerization of glucose-6-phosphate to fructose-6-phosphate. In Pseudomonas putida (strain ATCC 47054 / DSM 6125 / CFBP 8728 / NCIMB 11950 / KT2440), this protein is Glucose-6-phosphate isomerase 2.